Here is a 552-residue protein sequence, read N- to C-terminus: MSTFGYRRELSKYEDIDEDELLASLTEEELKELERELEDIEPDRNLPVGQRQKSLTEKTPTGTFSREALMAYWERETRKLLEKERLGACEKDSEQEEDNSEDIQEECFTESNSEVSEEAYTEEDDEEEEEEEEEEEDEDDSDDEDEEKQNSAASERPVNCEDGRSSSHVRHKKCSNAKNSENLFNGHDGKDTENLSFKSSAIHPCGNPTVIEDALEKVRSNDPETTEVNLNNIENITSQMLIQFSQALRDNTVVKSFSLANTHADDNVAIAIAGMLKVNQHITSLNIESNFITGKGVLAIMRALQHNKVLTELRFHNQRHIMGSQVEMDIVKLLKENTTLVKLGYHFDLAGPRMSMTSILTRNMDKQRQKRMQEQRQQEYGCDGAINPKTKVLQKGTPRSSPYTSPKSSPWSSPKLPRKSAPAKSQPPAPAPPPPPPPPPPPPPPPPPVIPDKKAPTRNIAEVIKQQESSRKALQNGQKKKKGKKGKKHENSILKEIKDSLKSVSDRKSEEGSRPSTRPSTPQRSLHDNLMEAIRASSIKQLRRVEVPEALR.

The interval 1-47 (MSTFGYRRELSKYEDIDEDELLASLTEEELKELERELEDIEPDRNLP) is interaction with tropomyosin alpha. Interaction with actin regions lie at residues 1-169 (MSTF…SSHV) and 170-498 (RHKK…KEIK). Residues 13–46 (YEDIDEDELLASLTEEELKELERELEDIEPDRNL) are a coiled coil. Disordered regions lie at residues 33–67 (LERE…FSRE), 87–191 (GACE…DGKD), and 364–531 (MDKQ…DNLM). Polar residues predominate over residues 51-64 (RQKSLTEKTPTGTF). Residues 86–151 (LGACEKDSEQ…DDEDEEKQNS (66 aa)) are a coiled coil. Acidic residues-rich tracts occupy residues 93–108 (SEQE…EECF) and 115–147 (VSEE…EDEE). The segment covering 364–377 (MDKQRQKRMQEQRQ) has biased composition (basic and acidic residues). Residues 398 to 415 (PRSSPYTSPKSSPWSSPK) are compositionally biased toward low complexity. Residues 425-450 (SQPPAPAPPPPPPPPPPPPPPPPPVI) are compositionally biased toward pro residues. Residues 478-488 (QKKKKGKKGKK) are compositionally biased toward basic residues. The segment covering 489–513 (HENSILKEIKDSLKSVSDRKSEEGS) has biased composition (basic and acidic residues). Residues 514-524 (RPSTRPSTPQR) are compositionally biased toward polar residues. The interval 526-545 (LHDNLMEAIRASSIKQLRRV) is interaction with actin 3. The WH2 domain maps to 526 to 545 (LHDNLMEAIRASSIKQLRRV).

This sequence belongs to the tropomodulin family. Can bind at least three actin monomers and thereby provides a nucleus for actin filament formation. Interacts (via N-terminus) with tropomyosin alpha (TPM1) (via N-terminus). May also interact with TPM2 (via N-terminus).

It localises to the cytoplasm. It is found in the myofibril. Its subcellular location is the sarcomere. The protein resides in the m line. The protein localises to the cytoskeleton. Mediates nucleation of actin filaments and thereby promotes actin polymerization. Plays a role in the regulation of actin filament length. Required for normal sarcomere organization in the heart, and for normal heart function. The protein is Leiomodin-2 (LMOD2) of Gallus gallus (Chicken).